We begin with the raw amino-acid sequence, 631 residues long: DNA mismatch repair protein MutL (631 aa).

Disordered regions lie at residues 337–362 (PHSPQIDDSSPYVKPETESSAFELQS) and 400–429 (AVQSNAFGSMSVPRETRSGSSGESRPRAEL).

It belongs to the DNA mismatch repair MutL/HexB family.

Its function is as follows. This protein is involved in the repair of mismatches in DNA. It is required for dam-dependent methyl-directed DNA mismatch repair. May act as a 'molecular matchmaker', a protein that promotes the formation of a stable complex between two or more DNA-binding proteins in an ATP-dependent manner without itself being part of a final effector complex. In Shewanella oneidensis (strain ATCC 700550 / JCM 31522 / CIP 106686 / LMG 19005 / NCIMB 14063 / MR-1), this protein is DNA mismatch repair protein MutL.